A 344-amino-acid polypeptide reads, in one-letter code: N-acetyl-gamma-glutamyl-phosphate reductase (344 aa).

Cysteine 147 is a catalytic residue.

This sequence belongs to the NAGSA dehydrogenase family. Type 1 subfamily.

The protein localises to the cytoplasm. The catalysed reaction is N-acetyl-L-glutamate 5-semialdehyde + phosphate + NADP(+) = N-acetyl-L-glutamyl 5-phosphate + NADPH + H(+). It functions in the pathway amino-acid biosynthesis; L-arginine biosynthesis; N(2)-acetyl-L-ornithine from L-glutamate: step 3/4. Functionally, catalyzes the NADPH-dependent reduction of N-acetyl-5-glutamyl phosphate to yield N-acetyl-L-glutamate 5-semialdehyde. This Bacillus amyloliquefaciens (Bacillus velezensis) protein is N-acetyl-gamma-glutamyl-phosphate reductase.